A 245-amino-acid chain; its full sequence is Ribonuclease 3 (245 aa).

An RNase III domain is found at 18–146 (LSKFLENLSI…FVGAIYLDSG (129 aa)). Residue Glu59 participates in Mg(2+) binding. Asp63 is a catalytic residue. Mg(2+)-binding residues include Asp132 and Glu135. Glu135 is a catalytic residue. A DRBM domain is found at 173-242 (DYKSLLQEYV…AEVALKAMEN (70 aa)).

It belongs to the ribonuclease III family. Homodimer. Mg(2+) serves as cofactor.

Its subcellular location is the cytoplasm. The catalysed reaction is Endonucleolytic cleavage to 5'-phosphomonoester.. Functionally, digests double-stranded RNA. Involved in the processing of primary rRNA transcript to yield the immediate precursors to the large and small rRNAs (23S and 16S). Processes some mRNAs, and tRNAs when they are encoded in the rRNA operon. Processes pre-crRNA and tracrRNA of type II CRISPR loci if present in the organism. This chain is Ribonuclease 3, found in Borreliella burgdorferi (strain ATCC 35210 / DSM 4680 / CIP 102532 / B31) (Borrelia burgdorferi).